The following is a 353-amino-acid chain: Protein RecA (353 aa).

65-72 serves as a coordination point for ATP; the sequence is GPESSGKT.

It belongs to the RecA family.

It localises to the cytoplasm. In terms of biological role, can catalyze the hydrolysis of ATP in the presence of single-stranded DNA, the ATP-dependent uptake of single-stranded DNA by duplex DNA, and the ATP-dependent hybridization of homologous single-stranded DNAs. It interacts with LexA causing its activation and leading to its autocatalytic cleavage. In Aeromonas salmonicida (strain A449), this protein is Protein RecA.